A 142-amino-acid chain; its full sequence is Large ribosomal subunit protein uL13 (142 aa).

It belongs to the universal ribosomal protein uL13 family. Part of the 50S ribosomal subunit.

Functionally, this protein is one of the early assembly proteins of the 50S ribosomal subunit, although it is not seen to bind rRNA by itself. It is important during the early stages of 50S assembly. The polypeptide is Large ribosomal subunit protein uL13 (Pseudomonas paraeruginosa (strain DSM 24068 / PA7) (Pseudomonas aeruginosa (strain PA7))).